We begin with the raw amino-acid sequence, 139 residues long: Gastrula zinc finger protein XlCGF67.1 (139 aa).

5 C2H2-type zinc fingers span residues 6–28 (VSCPECGKCFTSRTYLNVHKKVH), 33–55 (YSCSECGKSFLSRSHLNTHLRTH), 61–83 (YSCSECGKCFTSSAILITHKRIH), 89–111 (FSCQECGKSFSYRSVFMEHQKIH), and 117–139 (FSCSDCGKCFRYRSHLKVHSRIH).

Belongs to the krueppel C2H2-type zinc-finger protein family.

Its subcellular location is the nucleus. Functionally, may be involved in transcriptional regulation. This is Gastrula zinc finger protein XlCGF67.1 from Xenopus laevis (African clawed frog).